Reading from the N-terminus, the 504-residue chain is DnaJ homolog subfamily C member 3 (504 aa).

An N-terminal signal peptide occupies residues 1–31; it reads MVAPGSVRSRLGAVFPFLLVLVDLQYEGAEC. 9 TPR repeats span residues 37-70, 72-104, 105-138, 154-187, 188-221, 222-255, 268-301, 306-339, and 340-373; these read VEKHLELGKKLLAAGQLADALSQFHAAVDGDPDN, IAYYRRATVFLAMGKSKAALPDLTRVIELKMDF, TAARLQRGHLLLKQGRLAEAEDDFKKVLKSNPSE, MQRLRAQALDAFDSADYTAAITFLDEILEVCVWD, AELRELRAECFIKEGEPRKAISDLKAASKLKNDN, TEAFYKISILYYQLGDHELSLSEVRECLKLDQDH, LNKLIGSAEELIRDGRYTDATSKYESVMKAEPSV, VRSKERICHCFSKDEKPVEAIKICSEVLQLEPDN, and VNALKDRAEAYLIEEMYDEAIQDYEAAQEQNEND. The cysteines at positions 248 and 258 are disulfide-linked. Residue serine 274 is modified to Phosphoserine. A disulfide bond links cysteine 313 and cysteine 329. The tract at residues 375–393 is flexible linker; the sequence is QIREGLEKAQRLLKQSQKR. The J domain occupies 394-462; that stretch reads DYYKILGVKR…EMRRKFDDGE (69 aa). The disordered stretch occupies residues 451 to 481; that stretch reads DPEMRRKFDDGEDPLDAETQQGGGSNPFHRS. A Phosphoserine modification is found at serine 475.

Interacts with EIF2AK2 and EIF2AK3. Forms a trimeric complex with DNAJB1 and HSPA8. Interacts with THAP12.

It is found in the endoplasmic reticulum. Functionally, involved in the unfolded protein response (UPR) during ER stress. Co-chaperone of HSPA8/HSC70, it stimulates its ATPase activity. May inhibit both the autophosphorylation of EIF2AK2/PKR and the ability of EIF2AK2 to catalyze phosphorylation of the EIF2A. May inhibit EIF2AK3/PERK activity. In Rattus norvegicus (Rat), this protein is DnaJ homolog subfamily C member 3 (Dnajc3).